Reading from the N-terminus, the 60-residue chain is MAKKESFFKGVKSEMEKTSWPTKEELFKYTIIVVSTVIFFLVFFYALDIGINALKQLFLG.

A helical membrane pass occupies residues I31 to I51.

Belongs to the SecE/SEC61-gamma family. Component of the Sec protein translocase complex. Heterotrimer consisting of SecY, SecE and SecG subunits. The heterotrimers can form oligomers, although 1 heterotrimer is thought to be able to translocate proteins. Interacts with the ribosome. Interacts with SecDF, and other proteins may be involved. Interacts with SecA.

It is found in the cell membrane. Its function is as follows. Essential subunit of the Sec protein translocation channel SecYEG. Clamps together the 2 halves of SecY. May contact the channel plug during translocation. The sequence is that of Protein translocase subunit SecE from Staphylococcus epidermidis (strain ATCC 35984 / DSM 28319 / BCRC 17069 / CCUG 31568 / BM 3577 / RP62A).